A 268-amino-acid polypeptide reads, in one-letter code: MEMO1 family protein Ta0237 (268 aa).

This sequence belongs to the MEMO1 family.

In Thermoplasma acidophilum (strain ATCC 25905 / DSM 1728 / JCM 9062 / NBRC 15155 / AMRC-C165), this protein is MEMO1 family protein Ta0237.